The sequence spans 185 residues: Peptidyl-tRNA hydrolase (185 aa).

Tyr-14 is a binding site for tRNA. Catalysis depends on His-19, which acts as the Proton acceptor. TRNA-binding residues include Tyr-65, Asn-67, and Asn-113.

This sequence belongs to the PTH family. Monomer.

It is found in the cytoplasm. It catalyses the reaction an N-acyl-L-alpha-aminoacyl-tRNA + H2O = an N-acyl-L-amino acid + a tRNA + H(+). Hydrolyzes ribosome-free peptidyl-tRNAs (with 1 or more amino acids incorporated), which drop off the ribosome during protein synthesis, or as a result of ribosome stalling. Functionally, catalyzes the release of premature peptidyl moieties from peptidyl-tRNA molecules trapped in stalled 50S ribosomal subunits, and thus maintains levels of free tRNAs and 50S ribosomes. In Rickettsia akari (strain Hartford), this protein is Peptidyl-tRNA hydrolase.